Reading from the N-terminus, the 261-residue chain is Thioredoxin-like protein HCF164, chloroplastic (261 aa).

A chloroplast-targeting transit peptide spans 1–40 (MARLVFSLNLPSSHGFNLSPRNLQSFFVTQTGAPRFRAVR). Positions 39–91 (VRCKPNPESSETKQEKLVIDNGETSSASKEVESSSSVADSSSSSSSGFPESPN) are disordered. The segment covering 63–84 (SSASKEVESSSSVADSSSSSSS) has biased composition (low complexity). The region spanning 101 to 229 (VTVIAALSLF…LVENVNALAA (129 aa)) is the Thioredoxin domain. Active-site nucleophile residues include cysteine 150 and cysteine 153. A disulfide bridge connects residues cysteine 150 and cysteine 153.

This sequence belongs to the thioredoxin family. As to quaternary structure, interacts in vitro with LTO1.

It localises to the plastid. Its subcellular location is the chloroplast thylakoid membrane. Functionally, thiol-disulfide oxidoreductase that participates in various redox reactions in the chloroplast. Mediates the reduction of PSI-N in the thylakoid lumen. May interact and probably reduce other target proteins of the thylakoid membrane, such as FTSH2, FTSH8, LHCB5, atpA, atpB, atpE, petA and petC. Involved in the biogenesis of the plastid cytochrome b6f complex. Reducing equivalents are provided by stromal M-type thioredoxins and probably transduced through the thylakoid membrane by CCDA. Possesses low insulin disulfide bonds reducing activity. This chain is Thioredoxin-like protein HCF164, chloroplastic, found in Arabidopsis thaliana (Mouse-ear cress).